A 119-amino-acid chain; its full sequence is Large ribosomal subunit protein bL20 (119 aa).

The protein belongs to the bacterial ribosomal protein bL20 family.

Its function is as follows. Binds directly to 23S ribosomal RNA and is necessary for the in vitro assembly process of the 50S ribosomal subunit. It is not involved in the protein synthesizing functions of that subunit. This Lactococcus lactis subsp. cremoris (strain MG1363) protein is Large ribosomal subunit protein bL20.